The chain runs to 67 residues: Large ribosomal subunit protein uL29 (67 aa).

It belongs to the universal ribosomal protein uL29 family.

This is Large ribosomal subunit protein uL29 from Halorhodospira halophila (strain DSM 244 / SL1) (Ectothiorhodospira halophila (strain DSM 244 / SL1)).